The following is a 221-amino-acid chain: Jacalin-related lectin 47 (221 aa).

Jacalin-type lectin domains lie at M1–P64 and S71–P217.

The protein belongs to the jacalin lectin family.

This chain is Jacalin-related lectin 47 (JAL47), found in Arabidopsis thaliana (Mouse-ear cress).